A 214-amino-acid chain; its full sequence is Imidazole glycerol phosphate synthase subunit HisH (214 aa).

In terms of domain architecture, Glutamine amidotransferase type-1 spans isoleucine 3–threonine 211. Catalysis depends on cysteine 81, which acts as the Nucleophile. Active-site residues include histidine 186 and glutamate 188.

Heterodimer of HisH and HisF.

The protein localises to the cytoplasm. It catalyses the reaction 5-[(5-phospho-1-deoxy-D-ribulos-1-ylimino)methylamino]-1-(5-phospho-beta-D-ribosyl)imidazole-4-carboxamide + L-glutamine = D-erythro-1-(imidazol-4-yl)glycerol 3-phosphate + 5-amino-1-(5-phospho-beta-D-ribosyl)imidazole-4-carboxamide + L-glutamate + H(+). It carries out the reaction L-glutamine + H2O = L-glutamate + NH4(+). It participates in amino-acid biosynthesis; L-histidine biosynthesis; L-histidine from 5-phospho-alpha-D-ribose 1-diphosphate: step 5/9. In terms of biological role, IGPS catalyzes the conversion of PRFAR and glutamine to IGP, AICAR and glutamate. The HisH subunit catalyzes the hydrolysis of glutamine to glutamate and ammonia as part of the synthesis of IGP and AICAR. The resulting ammonia molecule is channeled to the active site of HisF. This is Imidazole glycerol phosphate synthase subunit HisH from Acaryochloris marina (strain MBIC 11017).